The following is a 432-amino-acid chain: Enolase (432 aa).

Residue Gln-168 coordinates (2R)-2-phosphoglycerate. The Proton donor role is filled by Glu-210. Mg(2+) is bound by residues Asp-247, Glu-288, and Asp-315. Lys-340, Arg-369, Ser-370, and Lys-391 together coordinate (2R)-2-phosphoglycerate. Catalysis depends on Lys-340, which acts as the Proton acceptor.

The protein belongs to the enolase family. Mg(2+) is required as a cofactor.

The protein resides in the cytoplasm. Its subcellular location is the secreted. The protein localises to the cell surface. It catalyses the reaction (2R)-2-phosphoglycerate = phosphoenolpyruvate + H2O. It functions in the pathway carbohydrate degradation; glycolysis; pyruvate from D-glyceraldehyde 3-phosphate: step 4/5. Functionally, catalyzes the reversible conversion of 2-phosphoglycerate (2-PG) into phosphoenolpyruvate (PEP). It is essential for the degradation of carbohydrates via glycolysis. The sequence is that of Enolase from Microcystis aeruginosa (strain NIES-843 / IAM M-2473).